The chain runs to 141 residues: Nuclear receptor 2C2-associated protein (141 aa).

This sequence belongs to the NR2C2AP family.

The protein localises to the nucleus. Its function is as follows. May act as a repressor of nr2c2-mediated transactivation by suppressing the binding between nr2c2 and its response element in target genes. The polypeptide is Nuclear receptor 2C2-associated protein (nr2c2ap) (Danio rerio (Zebrafish)).